A 647-amino-acid polypeptide reads, in one-letter code: Threonine--tRNA ligase (647 aa).

Positions 1-61 (MIKITFPDGA…TEDGAIEIVT (61 aa)) constitute a TGS domain. Residues 242 to 540 (DHRKLGKELD…LIENYKGAFP (299 aa)) are catalytic. Residues C336, H387, and H517 each coordinate Zn(2+).

Belongs to the class-II aminoacyl-tRNA synthetase family. As to quaternary structure, homodimer. Zn(2+) serves as cofactor.

The protein localises to the cytoplasm. The catalysed reaction is tRNA(Thr) + L-threonine + ATP = L-threonyl-tRNA(Thr) + AMP + diphosphate + H(+). Catalyzes the attachment of threonine to tRNA(Thr) in a two-step reaction: L-threonine is first activated by ATP to form Thr-AMP and then transferred to the acceptor end of tRNA(Thr). Also edits incorrectly charged L-seryl-tRNA(Thr). This chain is Threonine--tRNA ligase, found in Streptococcus sanguinis (strain SK36).